The following is a 328-amino-acid chain: D-cysteine desulfhydrase (328 aa).

K51 carries the post-translational modification N6-(pyridoxal phosphate)lysine.

This sequence belongs to the ACC deaminase/D-cysteine desulfhydrase family. In terms of assembly, homodimer. Pyridoxal 5'-phosphate serves as cofactor.

The catalysed reaction is D-cysteine + H2O = hydrogen sulfide + pyruvate + NH4(+) + H(+). Functionally, catalyzes the alpha,beta-elimination reaction of D-cysteine and of several D-cysteine derivatives. It could be a defense mechanism against D-cysteine. This chain is D-cysteine desulfhydrase, found in Shigella boydii serotype 18 (strain CDC 3083-94 / BS512).